The following is a 240-amino-acid chain: Probable Ni/Fe-hydrogenase B-type cytochrome subunit (240 aa).

The next 4 helical transmembrane spans lie at 31 to 51, 75 to 95, 142 to 163, and 196 to 213; these read LWHW…YFIG, FAAG…AFVG, LAMF…FALY, and LGMW…YLAA.

It belongs to the HupC/HyaC/HydC family.

The protein resides in the cell membrane. In terms of biological role, probable b-type cytochrome. The protein is Probable Ni/Fe-hydrogenase B-type cytochrome subunit (hupZ) of Azotobacter chroococcum mcd 1.